The following is a 349-amino-acid chain: MPMPLDDSTLSLLPDHPLAAHNTFGIAATARFAARITHASQFEALHRDPRVAHLPQLVLGGGSNVVFTRDFDGVVLLDEIAGRRVVREDDDAWYVEAGGGENWHAFVAWTLEHGMAGLENLALIPGTVGAAPIQNIGAYGLEMKAYFDSLVAVELATGCSERFDAARCAFGYRDSFFKREGRGRFAIVSVTFRLPKQWVPRLGYADVTRELDARGIAPDAATARDVFDAVVAIRRAKLPDPLVLGNAGSFFKNPVIDAAQFDALRARAPEVVSYPQPDGQVKLAAGWLIDRCGWKGRALGAAAVHDRQALVLVNRGGATGADVLALARAIQADVQTQFGVELEAEPVCL.

Positions 24-197 (FGIAATARFA…VSVTFRLPKQ (174 aa)) constitute an FAD-binding PCMH-type domain. The active site involves arginine 173. The active-site Proton donor is the serine 249. Glutamate 345 is an active-site residue.

Belongs to the MurB family. It depends on FAD as a cofactor.

Its subcellular location is the cytoplasm. The catalysed reaction is UDP-N-acetyl-alpha-D-muramate + NADP(+) = UDP-N-acetyl-3-O-(1-carboxyvinyl)-alpha-D-glucosamine + NADPH + H(+). It participates in cell wall biogenesis; peptidoglycan biosynthesis. Functionally, cell wall formation. In Burkholderia lata (strain ATCC 17760 / DSM 23089 / LMG 22485 / NCIMB 9086 / R18194 / 383), this protein is UDP-N-acetylenolpyruvoylglucosamine reductase.